The chain runs to 142 residues: Hemoglobin subunit alpha-C (142 aa).

N-acetylalanine is present on Ala-2. One can recognise a Globin domain in the interval 2–142; that stretch reads ALNCDDKAHI…VSGLLTSKYR (141 aa). His-59 contributes to the O2 binding site. Residue His-88 participates in heme b binding.

The protein belongs to the globin family. In terms of assembly, heterotetramer of either two alpha-B chains or two alpha-C chains and two beta chains. The two major hemoglobins, B and C, associate upon deoxygenation to form a trimer of tetramers, BC2, that has a much lower affinity for oxygen than either component alone. As to expression, red blood cells.

The alpha-C chain is a component of adult hemoglobin C. This Aquarana catesbeiana (American bullfrog) protein is Hemoglobin subunit alpha-C.